The following is a 222-amino-acid chain: Protein CicA (222 aa).

The polypeptide is Protein CicA (cicA) (Caulobacter vibrioides (strain ATCC 19089 / CIP 103742 / CB 15) (Caulobacter crescentus)).